A 706-amino-acid chain; its full sequence is Phenylalanine--tRNA ligase beta subunit, chloroplastic (706 aa).

One can recognise a B5 domain in the interval 300–388 (KVLKPIVLNY…RLHGFNNFLT (89 aa)). Residues Asp366, Asp372, Glu375, and Glu376 each coordinate Mg(2+). The FDX-ACB domain maps to 612–705 (SVYPKIVKDL…LELKVQAILR (94 aa)).

Belongs to the phenylalanyl-tRNA synthetase beta subunit family. Type 1 subfamily. As to quaternary structure, tetramer of two alpha and two beta subunits. Mg(2+) is required as a cofactor.

Its subcellular location is the plastid. It is found in the chloroplast. It carries out the reaction tRNA(Phe) + L-phenylalanine + ATP = L-phenylalanyl-tRNA(Phe) + AMP + diphosphate + H(+). This chain is Phenylalanine--tRNA ligase beta subunit, chloroplastic, found in Phaeodactylum tricornutum (strain CCAP 1055/1).